The primary structure comprises 263 residues: Small ribosomal subunit protein eS4, Y isoform 2 (263 aa).

Residues 42–104 enclose the S4 RNA-binding domain; the sequence is LPLIVFLRNR…TGEHFRLVYN (63 aa).

This sequence belongs to the eukaryotic ribosomal protein eS4 family.

This is Small ribosomal subunit protein eS4, Y isoform 2 (RPS4Y2) from Homo sapiens (Human).